The chain runs to 378 residues: Chaperone protein DnaJ (378 aa).

The J domain occupies 5-70 (DYYEVLSVSR…DKKAAYDQFG (66 aa)). Residues 133–211 (GLTKELRIPT…CHGEGRVEKS (79 aa)) form a CR-type zinc finger. The Zn(2+) site is built by Cys-146, Cys-149, Cys-163, Cys-166, Cys-185, Cys-188, Cys-199, and Cys-202. CXXCXGXG motif repeat units follow at residues 146-153 (CDSCDGSG), 163-170 (CGTCHGQG), 185-192 (CPTCHGRG), and 199-206 (CNKCHGEG).

The protein belongs to the DnaJ family. Homodimer. Zn(2+) is required as a cofactor.

It is found in the cytoplasm. Functionally, participates actively in the response to hyperosmotic and heat shock by preventing the aggregation of stress-denatured proteins and by disaggregating proteins, also in an autonomous, DnaK-independent fashion. Unfolded proteins bind initially to DnaJ; upon interaction with the DnaJ-bound protein, DnaK hydrolyzes its bound ATP, resulting in the formation of a stable complex. GrpE releases ADP from DnaK; ATP binding to DnaK triggers the release of the substrate protein, thus completing the reaction cycle. Several rounds of ATP-dependent interactions between DnaJ, DnaK and GrpE are required for fully efficient folding. Also involved, together with DnaK and GrpE, in the DNA replication of plasmids through activation of initiation proteins. The chain is Chaperone protein DnaJ from Shewanella sediminis (strain HAW-EB3).